Here is a 26-residue protein sequence, read N- to C-terminus: AMP deaminase 1 (26 aa).

Belongs to the metallo-dependent hydrolases superfamily. Adenosine and AMP deaminases family. As to quaternary structure, homotetramer. The cofactor is Zn(2+).

It catalyses the reaction AMP + H2O + H(+) = IMP + NH4(+). Its pathway is purine metabolism; IMP biosynthesis via salvage pathway; IMP from AMP: step 1/1. Functionally, AMP deaminase plays a critical role in energy metabolism. The chain is AMP deaminase 1 (AMPD1) from Oryctolagus cuniculus (Rabbit).